The following is a 236-amino-acid chain: Probable 6-phosphogluconolactonase (236 aa).

Belongs to the glucosamine/galactosamine-6-phosphate isomerase family. 6-phosphogluconolactonase subfamily.

The catalysed reaction is 6-phospho-D-glucono-1,5-lactone + H2O = 6-phospho-D-gluconate + H(+). The protein operates within carbohydrate degradation; pentose phosphate pathway; D-ribulose 5-phosphate from D-glucose 6-phosphate (oxidative stage): step 2/3. In terms of biological role, hydrolysis of 6-phosphogluconolactone to 6-phosphogluconate. This is Probable 6-phosphogluconolactonase (pgl) from Dictyostelium discoideum (Social amoeba).